A 1055-amino-acid chain; its full sequence is Elongation factor 3 (1055 aa).

Position 45 (V45) interacts with ADP. 7 HEAT repeats span residues V45–A86, S96–P133, A135–Y172, G175–N213, E217–I255, L257–S290, and R295–E337. ABC transporter domains are found at residues C447–Q659 and L687–G1004. ADP is bound by residues N723, E933, N936, and H962. 2 disordered regions span residues H987 to D1006 and E1024 to L1055. Over residues R1033–K1044 the composition is skewed to basic residues.

Belongs to the ABC transporter superfamily. ABCF family. EF3 subfamily. In terms of assembly, associates with ribosomes.

Its subcellular location is the cytoplasm. The protein localises to the cytosol. It catalyses the reaction ATP + H2O = ADP + phosphate + H(+). It participates in protein biosynthesis; polypeptide chain elongation. In terms of biological role, ribosome-dependent ATPase that functions in cytoplasmic translation elongation. Required for the ATP-dependent release of deacylated tRNA from the ribosomal E-site during protein biosynthesis. Stimulates the eEF1A-dependent binding of aminoacyl-tRNA to the ribosomal A-site, which has reduced affinity for tRNA as long as the E-site is occupied. Assists translation termination by stimulating the release of nascent protein from the ribosome by release factors. Appears to target calcium-channel protein CCH1 to the plasma membrane. This Cryptococcus neoformans var. neoformans serotype D (strain JEC21 / ATCC MYA-565) (Filobasidiella neoformans) protein is Elongation factor 3.